Reading from the N-terminus, the 328-residue chain is MLNEFPIFDYEDIQLIPNKCVIKSRAEADTSVTLGNHTFKLPVVPANMQTILDENVAEQLAKGGYFYIMHRFDEAGRIPFIKRMHDQGLIASISVGVKDYEYDFVRQLKADAPEYITIDIAHGHADSVISMIQHIKKELPDTFVIAGNVGTPEAVRELENAGADATKVGIGPGKVCITKVKTGFGTGGWQLAALRWCAKAARKPIIADGGIRTHGDIAKSIRFGASMIMIGSLFAGHIESPGKTIEVDGEQFKEYYGSASQYQKGAYKNVEGKRILLPAKGHLQDTLTEMEQDLQSAISYAGGRQVADLKHVDYVIVKNSIWNGDASH.

Cysteine 176 functions as the Thioimidate intermediate in the catalytic mechanism. An NADP(+)-binding site is contributed by 205 to 228; it reads IIADGGIRTHGDIAKSIRFGASMI.

Belongs to the IMPDH/GMPR family. GuaC type 2 subfamily.

The catalysed reaction is IMP + NH4(+) + NADP(+) = GMP + NADPH + 2 H(+). Its function is as follows. Catalyzes the irreversible NADPH-dependent deamination of GMP to IMP. It functions in the conversion of nucleobase, nucleoside and nucleotide derivatives of G to A nucleotides, and in maintaining the intracellular balance of A and G nucleotides. This chain is GMP reductase, found in Streptococcus pneumoniae (strain P1031).